We begin with the raw amino-acid sequence, 318 residues long: Mitochondrial thiamine pyrophosphate carrier (318 aa).

Solcar repeat units lie at residues 13-106 (NSKL…LTEL), 116-202 (HQFS…LKRA), and 214-309 (TGNL…FCNL). 6 helical membrane-spanning segments follow: residues 19 to 39 (AVAG…LDVI), 87 to 107 (ILSI…TELL), 122 to 142 (FVCG…VDVL), 173 to 193 (VFYK…GLQF), 220 to 240 (LLCG…LDLF), and 293 to 313 (ALST…FHCI).

Belongs to the mitochondrial carrier (TC 2.A.29) family.

It localises to the mitochondrion membrane. The enzyme catalyses thiamine phosphate(out) + thiamine diphosphate(in) = thiamine phosphate(in) + thiamine diphosphate(out). Mitochondrial transporter mediating uptake of thiamine diphosphate into mitochondria. It is not clear if the antiporter activity is affected by the membrane potential or by the proton electrochemical gradient. This chain is Mitochondrial thiamine pyrophosphate carrier (Slc25a19), found in Rattus norvegicus (Rat).